Reading from the N-terminus, the 726-residue chain is Catalase-peroxidase (726 aa).

The segment at residues 90–213 is a cross-link (tryptophyl-tyrosyl-methioninium (Trp-Tyr) (with M-239)); it reads WHAAGTYRIG…LAAVQMGLIY (124 aa). The Proton acceptor role is filled by His91. A cross-link (tryptophyl-tyrosyl-methioninium (Tyr-Met) (with W-90)) is located at residues 213 to 239; it reads YVNPEGPNGKPDPAAAARDIRETFARM. His254 is a binding site for heme b. Residues 338–359 are disordered; it reads TPKGGAGAGTVPDAHDPSKRHA.

This sequence belongs to the peroxidase family. Peroxidase/catalase subfamily. In terms of assembly, homodimer or homotetramer. Requires heme b as cofactor. In terms of processing, formation of the three residue Trp-Tyr-Met cross-link is important for the catalase, but not the peroxidase activity of the enzyme.

It carries out the reaction H2O2 + AH2 = A + 2 H2O. It catalyses the reaction 2 H2O2 = O2 + 2 H2O. Its function is as follows. Bifunctional enzyme with both catalase and broad-spectrum peroxidase activity. This Bradyrhizobium sp. (strain ORS 278) protein is Catalase-peroxidase.